A 295-amino-acid polypeptide reads, in one-letter code: MAKQIVLALAFAALVAFATAHTTIITTTIEDENPISGQRQVSQRIQGQRLNQCRMFLQQGQNIPREFDNPQMGRQQEQQLQQCCQELQNIEGQCQCEAVKQVFREAQQQVQQQQGRQLVPFRGSQQTQQLKQKAQILPNVCNLQSRRCEIGTITTTVTESNIDIPFRDRPFGTGSQQCRETEIQRPVGECQRFVEQQMQQSPRSTRPYQQRPGQQQQQQRGLQQQCCNELQNVKRECHCEAIQEVARRVMRQPQQQQQQRRGQFGGQEMETARRVIQNLPNQCDLEVQQCTTCTG.

Residues 1-20 form the signal peptide; sequence MAKQIVLALAFAALVAFATA. Positions 21–161 are excised as a propeptide; that stretch reads HTTIITTTIE…TITTTVTESN (141 aa). Polar residues predominate over residues 195–208; the sequence is EQQMQQSPRSTRPY. Residues 195–215 are disordered; it reads EQQMQQSPRSTRPYQQRPGQQ.

The protein belongs to the 2S seed storage albumins family. Post-translationally, the 38 kDa precursor may be cleaved into two polypeptides of approximately the same size. The mature protein is composed of a single polypeptide containing one or more intra-molecular disulfide linkages.

This is a 2S seed storage protein. The protein is 2S seed storage protein (HAG5) of Helianthus annuus (Common sunflower).